The primary structure comprises 275 residues: 3-methyl-2-oxobutanoate hydroxymethyltransferase (275 aa).

The Mg(2+) site is built by aspartate 51 and aspartate 90. Residues 51–52, aspartate 90, and lysine 120 contribute to the 3-methyl-2-oxobutanoate site; that span reads DS. Glutamate 122 is a Mg(2+) binding site. The Proton acceptor role is filled by glutamate 189.

The protein belongs to the PanB family. In terms of assembly, homodecamer; pentamer of dimers. Requires Mg(2+) as cofactor.

The protein resides in the cytoplasm. It carries out the reaction 3-methyl-2-oxobutanoate + (6R)-5,10-methylene-5,6,7,8-tetrahydrofolate + H2O = 2-dehydropantoate + (6S)-5,6,7,8-tetrahydrofolate. It participates in cofactor biosynthesis; (R)-pantothenate biosynthesis; (R)-pantoate from 3-methyl-2-oxobutanoate: step 1/2. Its function is as follows. Catalyzes the reversible reaction in which hydroxymethyl group from 5,10-methylenetetrahydrofolate is transferred onto alpha-ketoisovalerate to form ketopantoate. In Phenylobacterium zucineum (strain HLK1), this protein is 3-methyl-2-oxobutanoate hydroxymethyltransferase.